We begin with the raw amino-acid sequence, 136 residues long: Ig heavy chain V region BCL1 (136 aa).

A signal peptide spans 1 to 19; sequence MGWSCIIFFLVATATGVHS. An Ig-like domain is found at 20–135; sequence QVQLQQSGPE…WGQGTTLTVS (116 aa).

This is Ig heavy chain V region BCL1 from Mus musculus (Mouse).